A 188-amino-acid polypeptide reads, in one-letter code: MVLVYGGSFNPPTIAHEAIIHKLHEEFKPKKILIVPTGNYFSWKTDLIDFEHRFKMVELMTQHLDYVEISRLENTKAFLGSYHTLNELSKRYDDLYFVVGADHIKTLDQWKDYKKLIENYKFILLTRNNYTFDDDLLSKLGLKYEKMMFQSDISSSEIRKNLNQNLDKLNLNVKTYILENKLYEEVKV.

Belongs to the NadD family.

It catalyses the reaction nicotinate beta-D-ribonucleotide + ATP + H(+) = deamido-NAD(+) + diphosphate. It participates in cofactor biosynthesis; NAD(+) biosynthesis; deamido-NAD(+) from nicotinate D-ribonucleotide: step 1/1. In terms of biological role, catalyzes the reversible adenylation of nicotinate mononucleotide (NaMN) to nicotinic acid adenine dinucleotide (NaAD). The chain is Probable nicotinate-nucleotide adenylyltransferase from Acholeplasma laidlawii (strain PG-8A).